Reading from the N-terminus, the 138-residue chain is ATP synthase epsilon chain (138 aa).

This sequence belongs to the ATPase epsilon chain family. In terms of assembly, F-type ATPases have 2 components, CF(1) - the catalytic core - and CF(0) - the membrane proton channel. CF(1) has five subunits: alpha(3), beta(3), gamma(1), delta(1), epsilon(1). CF(0) has three main subunits: a, b and c.

The protein localises to the cell inner membrane. Produces ATP from ADP in the presence of a proton gradient across the membrane. The polypeptide is ATP synthase epsilon chain (Psychrobacter arcticus (strain DSM 17307 / VKM B-2377 / 273-4)).